The sequence spans 510 residues: ATP synthase subunit alpha, mitochondrial (510 aa).

171-178 (GDRQTGKT) contributes to the ATP binding site.

It belongs to the ATPase alpha/beta chains family. As to quaternary structure, F-type ATPases have 2 components, CF(1) - the catalytic core - and CF(0) - the membrane proton channel. CF(1) has five subunits: alpha(3), beta(3), gamma(1), delta(1), epsilon(1). CF(0) has three main subunits: a, b and c.

The protein resides in the mitochondrion. It localises to the mitochondrion inner membrane. Its function is as follows. Mitochondrial membrane ATP synthase (F(1)F(0) ATP synthase or Complex V) produces ATP from ADP in the presence of a proton gradient across the membrane which is generated by electron transport complexes of the respiratory chain. F-type ATPases consist of two structural domains, F(1) - containing the extramembraneous catalytic core, and F(0) - containing the membrane proton channel, linked together by a central stalk and a peripheral stalk. During catalysis, ATP synthesis in the catalytic domain of F(1) is coupled via a rotary mechanism of the central stalk subunits to proton translocation. Subunits alpha and beta form the catalytic core in F(1). Rotation of the central stalk against the surrounding alpha(3)beta(3) subunits leads to hydrolysis of ATP in three separate catalytic sites on the beta subunits. Subunit alpha does not bear the catalytic high-affinity ATP-binding sites. The protein is ATP synthase subunit alpha, mitochondrial (ATPA) of Helianthus annuus (Common sunflower).